Consider the following 202-residue polypeptide: Alpha-1-acid glycoprotein (202 aa).

The signal sequence occupies residues 1-18 (MALLWALAVLSHLPLLDA). Residues N34, N57, N94, N104, and N136 are each glycosylated (N-linked (GlcNAc...) asparagine). The cysteines at positions 91 and 184 are disulfide-linked.

The protein belongs to the calycin superfamily. Lipocalin family.

The protein resides in the secreted. Its function is as follows. Functions as a transport protein in the blood stream. Binds various ligands in the interior of its beta-barrel domain. Appears to function in modulating the activity of the immune system during the acute-phase reaction. The polypeptide is Alpha-1-acid glycoprotein (ORM1) (Bos taurus (Bovine)).